The chain runs to 152 residues: Small ribosomal subunit protein uS15 (152 aa).

It belongs to the universal ribosomal protein uS15 family. As to quaternary structure, part of the 30S ribosomal subunit.

This Methanocorpusculum labreanum (strain ATCC 43576 / DSM 4855 / Z) protein is Small ribosomal subunit protein uS15.